The following is a 348-amino-acid chain: Rhodopsin (348 aa).

Residues 1–33 (TEGPYFYVPMVNTTGIVRSPYEYPQYYLVNPAA) are Extracellular-facing. N12 carries N-linked (GlcNAc...) asparagine glycosylation. The helical transmembrane segment at 34–58 (YAVLGAYMFFLIILGFPINFLTLYV) threads the bilayer. Residues 59–70 (TLEHKKLRTPLN) are Cytoplasmic-facing. A helical membrane pass occupies residues 71 to 93 (YILLNLAVADLFMVIGGFTTTMY). Topologically, residues 94 to 107 (SSMHGYFVLGRLGC) are extracellular. A disulfide bridge connects residues C107 and C184. The chain crosses the membrane as a helical span at residues 108–130 (NLEGFSATLGGMISLWSLAVLAI). Residues 131-133 (ERW) carry the 'Ionic lock' involved in activated form stabilization motif. Residues 131–149 (ERWVVVCKPISNFRFGENH) are Cytoplasmic-facing. A helical membrane pass occupies residues 150 to 170 (AIMGVSLTWTMALACTVPPLV). Topologically, residues 171 to 199 (GWSRYIPEGMQCSCGIDYYTRAEGFNNES) are extracellular. The N-linked (GlcNAc...) asparagine glycan is linked to N197. A helical transmembrane segment spans residues 200–221 (FVLYMFFCHFMVPLIIIFFCYG). Residues 222–249 (RLLCAVKEAAAAQQESETTQRAEREVTR) lie on the Cytoplasmic side of the membrane. A helical transmembrane segment spans residues 250 to 271 (MVILMVIGYLVCWLPYASVAWF). Residues 272-283 (IFTHQGSEFGPL) lie on the Extracellular side of the membrane. Residues 284-305 (FMTIPAFFAKSSSIYNPVIYIC) form a helical membrane-spanning segment. Position 293 is an N6-(retinylidene)lysine (K293). The Cytoplasmic segment spans residues 306 to 348 (MNKQFRNCMITTLFCGKNPFEGEEEGASSTKTEASSASSVSPA). The S-palmitoyl cysteine moiety is linked to residue C320. The segment at 327–348 (GEEEGASSTKTEASSASSVSPA) is disordered. Residues 332 to 348 (ASSTKTEASSASSVSPA) show a composition bias toward low complexity.

It belongs to the G-protein coupled receptor 1 family. Opsin subfamily. Post-translationally, phosphorylated on some or all of the serine and threonine residues present in the C-terminal region. In terms of processing, contains one covalently linked retinal chromophore.

The protein resides in the membrane. The protein localises to the cell projection. It localises to the cilium. Its subcellular location is the photoreceptor outer segment. In terms of biological role, photoreceptor required for image-forming vision at low light intensity. While most salt water fish species use retinal as chromophore, most freshwater fish use 3-dehydroretinal, or a mixture of retinal and 3-dehydroretinal. Light-induced isomerization of 11-cis to all-trans retinal triggers a conformational change that activates signaling via G-proteins. Subsequent receptor phosphorylation mediates displacement of the bound G-protein alpha subunit by arrestin and terminates signaling. The chain is Rhodopsin (rho) from Neoniphon argenteus (Clearfin squirrelfish).